The following is a 337-amino-acid chain: Probable uridine nucleosidase 2 (337 aa).

His260 is an active-site residue.

The protein belongs to the IUNH family.

It localises to the cytoplasm. The enzyme catalyses uridine + H2O = D-ribose + uracil. Its function is as follows. Involved in pyrimidine breakdown. The polypeptide is Probable uridine nucleosidase 2 (URH2) (Oryza sativa subsp. japonica (Rice)).